Here is a 275-residue protein sequence, read N- to C-terminus: Exosome complex component Rrp42 (275 aa).

Belongs to the RNase PH family. Rrp42 subfamily. In terms of assembly, component of the archaeal exosome complex. Forms a hexameric ring-like arrangement composed of 3 Rrp41-Rrp42 heterodimers. The hexameric ring associates with a trimer of Rrp4 and/or Csl4 subunits.

The protein resides in the cytoplasm. Non-catalytic component of the exosome, which is a complex involved in RNA degradation. Contributes to the structuring of the Rrp41 active site. This is Exosome complex component Rrp42 from Saccharolobus islandicus (strain L.S.2.15 / Lassen #1) (Sulfolobus islandicus).